The following is a 61-amino-acid chain: Small ribosomal subunit protein uS14 (61 aa).

Positions 24, 27, 40, and 43 each coordinate Zn(2+).

Belongs to the universal ribosomal protein uS14 family. Zinc-binding uS14 subfamily. In terms of assembly, part of the 30S ribosomal subunit. Contacts proteins S3 and S10. Zn(2+) serves as cofactor.

Functionally, binds 16S rRNA, required for the assembly of 30S particles and may also be responsible for determining the conformation of the 16S rRNA at the A site. The protein is Small ribosomal subunit protein uS14 of Mycobacterium leprae (strain Br4923).